We begin with the raw amino-acid sequence, 351 residues long: Signal recognition particle receptor FtsY (351 aa).

GTP contacts are provided by residues 156–163, 238–242, and 302–305; these read GINGTGKT, DTAGR, and TKLD.

It belongs to the GTP-binding SRP family. FtsY subfamily. In terms of assembly, part of the signal recognition particle protein translocation system, which is composed of SRP and FtsY. SRP is a ribonucleoprotein composed of Ffh and a 4.5S RNA molecule.

Its subcellular location is the cell membrane. The protein localises to the cytoplasm. It carries out the reaction GTP + H2O = GDP + phosphate + H(+). Its function is as follows. Involved in targeting and insertion of nascent membrane proteins into the cytoplasmic membrane. Acts as a receptor for the complex formed by the signal recognition particle (SRP) and the ribosome-nascent chain (RNC). Interaction with SRP-RNC leads to the transfer of the RNC complex to the Sec translocase for insertion into the membrane, the hydrolysis of GTP by both Ffh and FtsY, and the dissociation of the SRP-FtsY complex into the individual components. The chain is Signal recognition particle receptor FtsY from Buchnera aphidicola subsp. Schizaphis graminum (strain Sg).